The sequence spans 164 residues: Peroxynitrite isomerase (164 aa).

Residues 21–27 carry the GXWXGXG motif; that stretch reads GRWGGRG. K130 and H156 together coordinate heme b.

This sequence belongs to the nitrobindin family. As to quaternary structure, homodimer. Requires heme b as cofactor.

The enzyme catalyses peroxynitrite = nitrate. It functions in the pathway nitrogen metabolism. Functionally, heme-binding protein able to scavenge peroxynitrite and to protect free L-tyrosine against peroxynitrite-mediated nitration, by acting as a peroxynitrite isomerase that converts peroxynitrite to nitrate. Therefore, this protein likely plays a role in peroxynitrite sensing and in the detoxification of reactive nitrogen and oxygen species (RNS and ROS, respectively). Is able to bind nitric oxide (NO) in vitro, but may act as a sensor of peroxynitrite levels in vivo. The polypeptide is Peroxynitrite isomerase (Nocardioides sp. (strain ATCC BAA-499 / JS614)).